The sequence spans 327 residues: Small ribosomal subunit protein RACK1z (327 aa).

WD repeat units lie at residues 13-44 (AHTDMVTAIATPIDNADIIVSASRDKSIILWK), 61-91 (GHSHFVEDVVLSSDGQFALSGSWDGELRLWD), 103-133 (GHTKDVLSVAFSLDNRQIVSASRDRTIKLWN), 148-180 (GHRDWVSCVRFSPNTLQPTIVSASWDKTVKVWN), 192-222 (GHTGYVSTVAVSPDGSLCASGGKDGVVLLWD), 233-262 (EANSVIHALCFSPNRYWLCAATEHGIKIWD), and 293-323 (RKVIYCTSLNWSADGSTLFSGYTDGVIRVWG).

It belongs to the WD repeat G protein beta family. Ribosomal protein RACK1 subfamily. In terms of assembly, homodimer and heterodimer with RACK1B or RACK1C. Interacts with NUDT7. Interacts with GB1, MEKK1, MKK4, MKK5, MPK3 and MPK6, but not with GPA1 or MPK4. Interacts with OFUT20. In terms of tissue distribution, widely expressed.

Its subcellular location is the cytoplasm. It localises to the nucleus. In terms of biological role, major component of the RACK1 regulatory proteins that play a role in multiple signal transduction pathways. Involved in multiple hormone responses and developmental processes. MAPK cascade scaffolding protein involved in the protease IV and ArgC signaling pathway but not the flg22 pathway. The sequence is that of Small ribosomal subunit protein RACK1z from Arabidopsis thaliana (Mouse-ear cress).